We begin with the raw amino-acid sequence, 116 residues long: UPF0102 protein ELI_05985 (116 aa).

Belongs to the UPF0102 family.

This Erythrobacter litoralis (strain HTCC2594) protein is UPF0102 protein ELI_05985.